Consider the following 241-residue polypeptide: Ribosomal RNA small subunit methyltransferase J (241 aa).

Residues 94–95 (RD) and D163 contribute to the S-adenosyl-L-methionine site.

The protein belongs to the methyltransferase superfamily. RsmJ family.

It localises to the cytoplasm. It carries out the reaction guanosine(1516) in 16S rRNA + S-adenosyl-L-methionine = N(2)-methylguanosine(1516) in 16S rRNA + S-adenosyl-L-homocysteine + H(+). Its function is as follows. Specifically methylates the guanosine in position 1516 of 16S rRNA. The chain is Ribosomal RNA small subunit methyltransferase J from Francisella tularensis subsp. tularensis (strain FSC 198).